The chain runs to 418 residues: 3-phosphoshikimate 1-carboxyvinyltransferase (418 aa).

The 3-phosphoshikimate site is built by lysine 26, serine 27, and arginine 31. Lysine 26 serves as a coordination point for phosphoenolpyruvate. Phosphoenolpyruvate contacts are provided by glycine 97 and arginine 125. Positions 170, 171, 172, 297, 320, and 324 each coordinate 3-phosphoshikimate. Glutamine 172 serves as a coordination point for phosphoenolpyruvate. The Proton acceptor role is filled by aspartate 297. Phosphoenolpyruvate-binding residues include arginine 328, arginine 375, and lysine 400.

This sequence belongs to the EPSP synthase family. As to quaternary structure, monomer.

Its subcellular location is the cytoplasm. The catalysed reaction is 3-phosphoshikimate + phosphoenolpyruvate = 5-O-(1-carboxyvinyl)-3-phosphoshikimate + phosphate. Its pathway is metabolic intermediate biosynthesis; chorismate biosynthesis; chorismate from D-erythrose 4-phosphate and phosphoenolpyruvate: step 6/7. Its function is as follows. Catalyzes the transfer of the enolpyruvyl moiety of phosphoenolpyruvate (PEP) to the 5-hydroxyl of shikimate-3-phosphate (S3P) to produce enolpyruvyl shikimate-3-phosphate and inorganic phosphate. The polypeptide is 3-phosphoshikimate 1-carboxyvinyltransferase (Pseudomonas syringae pv. tomato (strain ATCC BAA-871 / DC3000)).